Here is a 68-residue protein sequence, read N- to C-terminus: Prokaryotic ubiquitin-like protein Pup (68 aa).

The disordered stretch occupies residues 1–37 (MAQERIFGTGSRREDEPDTPAPVDPPVSGAAQAQRDM). The interval 24–62 (DPPVSGAAQAQRDMQGTDDLLAEIDGVLETNAEAFVKGF) is ARC ATPase binding. Deamidated glutamine is present on Gln68. Residue Gln68 forms an Isoglutamyl lysine isopeptide (Gln-Lys) (interchain with K-? in acceptor proteins) linkage.

This sequence belongs to the prokaryotic ubiquitin-like protein family. As to quaternary structure, strongly interacts with the proteasome-associated ATPase ARC through a hydrophobic interface; the interacting region of Pup lies in its C-terminal half. There is one Pup binding site per ARC hexamer ring. In terms of processing, is modified by deamidation of its C-terminal glutamine to glutamate by the deamidase Dop, a prerequisite to the subsequent pupylation process.

It functions in the pathway protein degradation; proteasomal Pup-dependent pathway. Its function is as follows. Protein modifier that is covalently attached to lysine residues of substrate proteins, thereby targeting them for proteasomal degradation. The tagging system is termed pupylation. The polypeptide is Prokaryotic ubiquitin-like protein Pup (Kocuria rhizophila (strain ATCC 9341 / DSM 348 / NBRC 103217 / DC2201)).